Reading from the N-terminus, the 723-residue chain is Protein Hook homolog (723 aa).

The region spanning 4–120 (TELCECLVQW…RLLQLILGCA (117 aa)) is the Calponin-homology (CH) domain. Coiled-coil stretches lie at residues 162 to 423 (VLPE…MQLQ) and 457 to 665 (EIKE…IVSA). Residues 682–723 (LANGGPMQGGQSFLARQRQATSRRTTVSTTHPGHARSVNFVN) form a disordered region. Residues 696 to 711 (ARQRQATSRRTTVSTT) show a composition bias toward low complexity.

The protein belongs to the hook family. Interacts with microtubules.

It localises to the cytoplasm. The protein localises to the cytoskeleton. May function to promote vesicle trafficking and/or fusion. May act to link a number of membrane-bound organelles to the cytoskeleton. The protein is Protein Hook homolog of Branchiostoma floridae (Florida lancelet).